The following is a 310-amino-acid chain: tRNA-cytidine(32) 2-sulfurtransferase (310 aa).

Positions 47-52 (SGGKDS) match the PP-loop motif motif. Residues C122, C125, and C213 each contribute to the [4Fe-4S] cluster site.

This sequence belongs to the TtcA family. As to quaternary structure, homodimer. Mg(2+) is required as a cofactor. [4Fe-4S] cluster serves as cofactor.

The protein resides in the cytoplasm. It carries out the reaction cytidine(32) in tRNA + S-sulfanyl-L-cysteinyl-[cysteine desulfurase] + AH2 + ATP = 2-thiocytidine(32) in tRNA + L-cysteinyl-[cysteine desulfurase] + A + AMP + diphosphate + H(+). The protein operates within tRNA modification. Functionally, catalyzes the ATP-dependent 2-thiolation of cytidine in position 32 of tRNA, to form 2-thiocytidine (s(2)C32). The sulfur atoms are provided by the cysteine/cysteine desulfurase (IscS) system. In Cronobacter sakazakii (strain ATCC BAA-894) (Enterobacter sakazakii), this protein is tRNA-cytidine(32) 2-sulfurtransferase.